The primary structure comprises 131 residues: Fumarate reductase subunit C (131 aa).

3 consecutive transmembrane segments (helical) span residues 30-50 (EGTCLPQLWFSLVVLFGVFAL), 58-78 (AGFVGFLSNPIVMLINIVTLI), and 109-129 (IVRGLWGLTIVVTVVILAVAL).

This sequence belongs to the FrdC family. In terms of assembly, part of an enzyme complex containing four subunits: a flavoprotein (FrdA), an iron-sulfur protein (FrdB), and two hydrophobic anchor proteins (FrdC and FrdD).

Its subcellular location is the cell inner membrane. Functionally, two distinct, membrane-bound, FAD-containing enzymes are responsible for the catalysis of fumarate and succinate interconversion; fumarate reductase is used in anaerobic growth, and succinate dehydrogenase is used in aerobic growth. Anchors the catalytic components of the fumarate reductase complex to the cell inner membrane, binds quinones. In Proteus mirabilis (strain HI4320), this protein is Fumarate reductase subunit C.